Here is a 134-residue protein sequence, read N- to C-terminus: Ion transport peptide-like (134 aa).

Intrachain disulfides connect Cys62–Cys98, Cys78–Cys94, and Cys81–Cys107.

This sequence belongs to the arthropod CHH/MIH/GIH/VIH hormone family.

It localises to the secreted. In Schistocerca gregaria (Desert locust), this protein is Ion transport peptide-like.